We begin with the raw amino-acid sequence, 267 residues long: Interleukin-1 alpha (267 aa).

The propeptide occupies 1 to 112 (MAKVPDLFED…DPEEGIIKPR (112 aa)). A glycan (N-linked (GlcNAc...) asparagine) is linked at Asn-64. The residue at position 82 (Lys-82) is an N6-acetyllysine. Residues 82–86 (KKRRL) form a nuclear localization signal (NLS) region. Ser-87 is modified (phosphoserine). N-linked (GlcNAc...) asparagine glycans are attached at residues Asn-100 and Asn-141.

Belongs to the IL-1 family. In terms of assembly, monomer. Interacts with TMED10; the interaction mediates the translocation from the cytoplasm into the ERGIC (endoplasmic reticulum-Golgi intermediate compartment) and thereby secretion. Interacts with IL1R1. Interacts with S100A13; this interaction is the first step in the export of IL1A, followed by direct translocation of this complex across the plasma membrane. Acetylated within its nuclear localization sequence, which impacts subcellular localization. Post-translationally, proteolytic processed by CAPN1 in a calcium-dependent manner. Cleavage from 31 kDa precursor to 18 kDa biologically active molecules. In terms of processing, phosphorylated. Phosphorylation greatly enhances susceptibility to digestion and promotes the conversion of pre-IL1A alpha to the biologically active IL1A.

The protein localises to the nucleus. The protein resides in the cytoplasm. Its subcellular location is the secreted. Its function is as follows. Cytokine constitutively present intracellularly in nearly all resting non-hematopoietic cells that plays an important role in inflammation and bridges the innate and adaptive immune systems. After binding to its receptor IL1R1 together with its accessory protein IL1RAP, forms the high affinity interleukin-1 receptor complex. Signaling involves the recruitment of adapter molecules such as MYD88, IRAK1 or IRAK4. In turn, mediates the activation of NF-kappa-B and the three MAPK pathways p38, p42/p44 and JNK pathways. Within the cell, acts as an alarmin and cell death results in its liberation in the extracellular space after disruption of the cell membrane to induce inflammation and alert the host to injury or damage. In addition to its role as a danger signal, which occurs when the cytokine is passively released by cell necrosis, directly senses DNA damage and acts as signal for genotoxic stress without loss of cell integrity. The chain is Interleukin-1 alpha (IL1A) from Oryctolagus cuniculus (Rabbit).